The primary structure comprises 754 residues: MYTRFGPPIVFLISCYALILCGTVDALPRAPYFNDDINKTTTTSEDKTVGNTVVEEEKKTYTVGDSEGYQEASRLLQKSLNLSLDPCDDFFEYACRAWVDSHPIPDDLTSYSQFTATREKVLAEMRKLYEDNTSIPTSKSIALIKQIYNTCMDTEKHNAVGARDLLEKIKTYGYWPMVHNEKWRESTFDLTKLLSNTIQSRDVSVFFDFGPAEDSRNVSRRLLSFDQGSLGLGYSTRDYYLDEKKYEKQMKAYRKYTIGKVRYYTEDAGMAVNESKIESDVDEIIAFEKEWAQILVAEEDRRNYTKLYNVRRFDDLKEYMSIIDWKKLTLSTTPFLVHSYLKTNPSIIISDVEYLQKMNTLLQNTDPRIVTNYILLRWAGSWSQEIGKKYEDLQQEFAFQMYGRKQRQPRWKDCVSSAGGKLSYASGSMYVRKYFDANAKNTTLDMITDLQEAFRNMMHANDWMDAETKKYALEKADQMLKQIGYPDFILNDEKLDDWYKGLEGAPEDSFSQLVEKSIQWRNNFYYRRLLEPVNRFEFISSAAVVNAFYSPTRNAIAFPAGILQQPFFDARFPKALNYGGIGAVIGHEITHGFDDTGRQFDNVGNLRDWWDNTTSSKFNERTQCIIEQYADVKLRGTDLRINGKLTQGENIADNGGIKQAFKAYKSYLEKHGGQEARLPQFESLTNEQLFFVGYAQVWCGAKTPETKTLLLLTDPHSPETARVNTVLTNQPEFAEAFKCPAGSPMNPTKRCVVW.

A helical; Signal-anchor for type II membrane protein transmembrane segment spans residues Phe-5 to Leu-27. N-linked (GlcNAc...) asparagine glycosylation is found at Asn-38, Asn-81, Asn-132, Asn-217, Asn-273, Asn-303, and Asn-441. The Peptidase M13 domain occupies Val-63–Trp-754. Intrachain disulfides connect Cys-87–Cys-739, Cys-95–Cys-699, Cys-151–Cys-414, and Cys-624–Cys-751. His-587 lines the Zn(2+) pocket. The active site involves Glu-588. His-591 is a binding site for Zn(2+). Asn-612 carries an N-linked (GlcNAc...) asparagine glycan. Residue Glu-649 participates in Zn(2+) binding. Residue Asp-653 is the Proton donor of the active site.

This sequence belongs to the peptidase M13 family. Zn(2+) serves as cofactor. As to expression, specifically expressed in pharyngeal cells and a single head neuron.

It localises to the membrane. In terms of biological role, probable cell surface protease. Required to control the neuronal innervation of pharyngeal pumping. The protein is Neprilysin-1 (nep-1) of Caenorhabditis elegans.